Consider the following 267-residue polypeptide: Ribosomal RNA small subunit methyltransferase NEP1 (267 aa).

The interval 1–46 (MSELKNGTTEPKKNETTQSDSKSKSTSTNKSSVPPASLVPVQPTAL) is disordered. Over residues 16–32 (TTQSDSKSKSTSTNKSS) the composition is skewed to low complexity. S-adenosyl-L-methionine is bound by residues Leu195, Gly222, 227 to 229 (GKD), and 242 to 247 (LSDYPL).

It belongs to the class IV-like SAM-binding methyltransferase superfamily. RNA methyltransferase NEP1 family. As to quaternary structure, homodimer.

It is found in the nucleus. The protein localises to the nucleolus. It catalyses the reaction a pseudouridine in rRNA + S-adenosyl-L-methionine = an N(1)-methylpseudouridine in rRNA + S-adenosyl-L-homocysteine + H(+). In terms of biological role, S-adenosyl-L-methionine-dependent pseudouridine N(1)-methyltransferase that methylates the pseudouridine corresponding to position 1189 (Psi1189) in S.cerevisiae 18S rRNA. Involved the biosynthesis of the hypermodified N1-methyl-N3-(3-amino-3-carboxypropyl) pseudouridine (m1acp3-Psi) conserved in eukaryotic 18S rRNA. Also has an essential role in 40S ribosomal subunit biogenesis independent on its methyltransferase activity, facilitating the incorporation of ribosomal protein S19 during the formation of pre-ribosomes. In Candida albicans (Yeast), this protein is Ribosomal RNA small subunit methyltransferase NEP1.